The sequence spans 303 residues: Ribosomal protein uL3 glutamine methyltransferase (303 aa).

This sequence belongs to the protein N5-glutamine methyltransferase family. PrmB subfamily.

It carries out the reaction L-glutaminyl-[ribosomal protein uL3] + S-adenosyl-L-methionine = N(5)-methyl-L-glutaminyl-[ribosomal protein uL3] + S-adenosyl-L-homocysteine + H(+). Functionally, methylates large ribosomal subunit protein uL3 on a specific glutamine residue. This chain is Ribosomal protein uL3 glutamine methyltransferase, found in Neisseria meningitidis serogroup A / serotype 4A (strain DSM 15465 / Z2491).